The following is a 124-amino-acid chain: Small ribosomal subunit protein eS6 (124 aa).

This sequence belongs to the eukaryotic ribosomal protein eS6 family.

This Methanococcus maripaludis (strain C6 / ATCC BAA-1332) protein is Small ribosomal subunit protein eS6.